The primary structure comprises 788 residues: Protein translocase subunit SecA (788 aa).

ATP is bound by residues Gln85, 103–107, and Asp494; that span reads GEGKT.

Belongs to the SecA family. As to quaternary structure, monomer and homodimer. Part of the essential Sec protein translocation apparatus which comprises SecA, SecYEG and auxiliary proteins SecDF. Other proteins may also be involved.

It is found in the cell membrane. The protein localises to the cytoplasm. It catalyses the reaction ATP + H2O + cellular proteinSide 1 = ADP + phosphate + cellular proteinSide 2.. Its function is as follows. Part of the Sec protein translocase complex. Interacts with the SecYEG preprotein conducting channel. Has a central role in coupling the hydrolysis of ATP to the transfer of proteins into and across the cell membrane, serving as an ATP-driven molecular motor driving the stepwise translocation of polypeptide chains across the membrane. This Oenococcus oeni (strain ATCC BAA-331 / PSU-1) protein is Protein translocase subunit SecA.